The primary structure comprises 249 residues: UPF0696 protein C11orf68 homolog (249 aa).

It belongs to the UPF0696 family.

This is UPF0696 protein C11orf68 homolog from Danio rerio (Zebrafish).